The chain runs to 169 residues: Mitochondrial ATP-independent inner membrane protease subunit 1b (169 aa).

Catalysis depends on residues Ser47 and Lys91.

It belongs to the peptidase S26 family. IMP1 subfamily. Heterodimer of 2 subunits, IMP1A/B and IMP12.

Its subcellular location is the mitochondrion inner membrane. Its function is as follows. Catalyzes the removal of transit peptides required for the targeting of proteins from the mitochondrial matrix, across the inner membrane, into the inter-membrane space. The polypeptide is Mitochondrial ATP-independent inner membrane protease subunit 1b (Arabidopsis thaliana (Mouse-ear cress)).